The chain runs to 415 residues: YDG domain-containing protein At5g47160 (415 aa).

The segment at 163–186 (KKLSNASRLRANAHRPTQHKDERR) is disordered. Positions 262–407 (GSVPGIKVGD…NILFKFKLRR (146 aa)) constitute a YDG domain.

It is found in the nucleus. The sequence is that of YDG domain-containing protein At5g47160 from Arabidopsis thaliana (Mouse-ear cress).